The chain runs to 279 residues: uncharacterized protein (279 aa).

A compositionally biased stretch (low complexity) spans 1-29 (MSSRYTSSYTPSSRYGSGWDYSSSYSSSR). Disordered regions lie at residues 1–111 (MSSR…APRE) and 137–233 (LTLA…AEAL). The segment covering 30–44 (TSRDRDTGSYRDRDY) has biased composition (basic and acidic residues). Residues 45-59 (SSTSYTSTRPRYSTY) are compositionally biased toward low complexity. Positions 142–153 (EPEESEEEEDDE) are enriched in acidic residues. The segment covering 170–186 (ESSPVSSPVKEVSSAAS) has biased composition (low complexity). The segment covering 189 to 205 (ANDNGNETENRTPSPTV) has biased composition (polar residues). The segment covering 221-233 (SDVKKEGGDAEAL) has biased composition (basic and acidic residues).

This is an uncharacterized protein from Caenorhabditis elegans.